The following is a 251-amino-acid chain: DNA-directed RNA polymerase III subunit RPC7 (251 aa).

Residues 186–251 (DDASTGDGAA…EEDPNEEAAF (66 aa)) form a disordered region. At S189 the chain carries Phosphoserine. Acidic residues-rich tracts occupy residues 203 to 225 (GEDDDLADDDFEEDEDEEDDDDY) and 234 to 251 (GDDDDYGDEEDPNEEAAF).

This sequence belongs to the eukaryotic RPC7 RNA polymerase subunit family. As to quaternary structure, component of the RNA polymerase III (Pol III) complex consisting of 17 subunits.

It is found in the nucleus. In terms of biological role, DNA-dependent RNA polymerase catalyzes the transcription of DNA into RNA using the four ribonucleoside triphosphates as substrates. Specific peripheric component of RNA polymerase III which synthesizes small RNAs, such as 5S rRNA and tRNAs. C31 is involved in the formation of the initiation complex. This is DNA-directed RNA polymerase III subunit RPC7 (RPC31) from Saccharomyces cerevisiae (strain ATCC 204508 / S288c) (Baker's yeast).